We begin with the raw amino-acid sequence, 115 residues long: Synaptobrevin homolog 2 (115 aa).

Over residues 1 to 16 the composition is skewed to low complexity; it reads MSSSVPYDPYVPPEES. The interval 1–28 is disordered; the sequence is MSSSVPYDPYVPPEESNSGANPNSQNKT. Residues 1 to 93 are Cytoplasmic-facing; the sequence is MSSSVPYDPY…MWWKDLKMRM (93 aa). Residues 17–28 are compositionally biased toward polar residues; that stretch reads NSGANPNSQNKT. The region spanning 27 to 87 is the v-SNARE coiled-coil homology domain; the sequence is KTAALRQEID…NRVRKQMWWK (61 aa). Serine 58 is modified (phosphoserine). A Glycyl lysine isopeptide (Lys-Gly) (interchain with G-Cter in ubiquitin) cross-link involves residue lysine 62. Cysteine 94 carries the S-palmitoyl cysteine lipid modification. The chain crosses the membrane as a helical; Anchor for type IV membrane protein span at residues 94-112; that stretch reads CLFLVVIILLVVIIVPIVV. Over 113 to 115 the chain is Vesicular; the sequence is HFS.

The protein belongs to the synaptobrevin family. In terms of processing, palmitoylated by SWF1.

It is found in the endomembrane system. In terms of biological role, SNC1 and SNC2 are vesicle-targeting proteins essential for normal secretory traffic between the Golgi and the plasma membrane. They may also be involved in vesicle fusion. The chain is Synaptobrevin homolog 2 (SNC2) from Saccharomyces cerevisiae (strain ATCC 204508 / S288c) (Baker's yeast).